The sequence spans 202 residues: Apolipoprotein R (202 aa).

The first 28 residues, 1 to 28, serve as a signal peptide directing secretion; sequence MPPNLQRIFPALCLLGVLFLLHCTPVLC. 2 consecutive Sushi domains span residues 29–87 and 88–145; these read GCDN…QCKA and LCPK…KCEW. 4 cysteine pairs are disulfide-bonded: Cys30/Cys73, Cys59/Cys85, Cys89/Cys130, and Cys116/Cys143.

In terms of assembly, forms high molecular weight disulfide-linked complexes. Plasma. Found on very low-density lipoprotein (VLDL), on chylomicrons, and in the D &gt; 1.21 g/ml fraction of pig plasma. Found in liver, spleen, lung, bone marrow and lymph node.

The protein resides in the secreted. Its function is as follows. May be a lipoprotein-borne regulator of either the coagulation or the complement cascades. The chain is Apolipoprotein R (APOR) from Sus scrofa (Pig).